The sequence spans 257 residues: MRAYVITIGNEILKGRTINTNAAHIGRVLTYAGYDVIRMVVVPDEIDEIVWAFRDGLSRADLIVSTGGLGPTFDDKTVEALAKALNLELELNQEAFSMVKSKYDRLGVELTKERIKMAYMPKGAKPLPNPVGTAPGVYIEYAGKRILTLPGVPAEMEAILDEALPQLRVPGRYYYEESVVVRGIMESALAPVVNEVMRLNAGLVYVKSHPKGIEIDKPVVEVEVSASGSSEEEVRGRVKEAIRQLVSRAKSINPQCC.

The protein belongs to the CinA family.

The polypeptide is Protein Cmaq_1209 (Caldivirga maquilingensis (strain ATCC 700844 / DSM 13496 / JCM 10307 / IC-167)).